We begin with the raw amino-acid sequence, 160 residues long: 2-amino-4-hydroxy-6-hydroxymethyldihydropteridine pyrophosphokinase (160 aa).

Belongs to the HPPK family. Monomer.

The enzyme catalyses 6-hydroxymethyl-7,8-dihydropterin + ATP = (7,8-dihydropterin-6-yl)methyl diphosphate + AMP + H(+). The protein operates within cofactor biosynthesis; tetrahydrofolate biosynthesis; 2-amino-4-hydroxy-6-hydroxymethyl-7,8-dihydropteridine diphosphate from 7,8-dihydroneopterin triphosphate: step 4/4. Its function is as follows. Catalyzes the transfer of pyrophosphate from adenosine triphosphate (ATP) to 6-hydroxymethyl-7,8-dihydropterin, an enzymatic step in folate biosynthesis pathway. The sequence is that of 2-amino-4-hydroxy-6-hydroxymethyldihydropteridine pyrophosphokinase (folK) from Haemophilus influenzae (strain ATCC 51907 / DSM 11121 / KW20 / Rd).